Reading from the N-terminus, the 174-residue chain is MMYALFLLSVGLVMGFVGFSSKPSPIYGGLVLIVSGVVGCVIILNFGGGYMGLMVFLIYLGGMMVVFGYTTAMAIEEYPEAWGSGVEVLVSVLVGLAMEVGLVLWVKEYDGVVVVVNFNSVGSWMIYEGEGSGLIREDPIGAGALYDYGRWLVVVTGWTLFVGVYIVIEIARGN.

A run of 6 helical transmembrane segments spans residues 1 to 21 (MMYALFLLSVGLVMGFVGFSS), 26 to 46 (IYGGLVLIVSGVVGCVIILNF), 47 to 67 (GGGYMGLMVFLIYLGGMMVVF), 86 to 106 (VEVLVSVLVGLAMEVGLVLWV), 111 to 131 (GVVVVVNFNSVGSWMIYEGEG), and 151 to 171 (WLVVVTGWTLFVGVYIVIEIA).

This sequence belongs to the complex I subunit 6 family. As to quaternary structure, core subunit of respiratory chain NADH dehydrogenase (Complex I) which is composed of 45 different subunits.

Its subcellular location is the mitochondrion inner membrane. The enzyme catalyses a ubiquinone + NADH + 5 H(+)(in) = a ubiquinol + NAD(+) + 4 H(+)(out). Functionally, core subunit of the mitochondrial membrane respiratory chain NADH dehydrogenase (Complex I) which catalyzes electron transfer from NADH through the respiratory chain, using ubiquinone as an electron acceptor. Essential for the catalytic activity and assembly of complex I. In Homo sapiens (Human), this protein is NADH-ubiquinone oxidoreductase chain 6 (MT-ND6).